A 1070-amino-acid polypeptide reads, in one-letter code: MSGAGANYWIARLLAVIAGLLGALLAMATPFLPVNQNTAQLNWPQNSTFESVEAPLIGYVATGLNVTVPCAAAAGLTGPQSAGQTVLLSTVPKQAPKAVDRGLLIQRANDDLVLVVRNVPVVSAPMSQVLSPACQRLTFAAYFDKITAEFVGLTYGPNAEHPGVPLRGERSGYDFRPQIVGVFTDLSGPIPTGLNFSATIDTRYSSSPTLLKTIAMILGVVLTIVALVALHLLDTADGTQHRRLLPSRWWSIGCLDGLVITILAWWHFVGANTSDDGYILTMARVSEHAGYMANYYRWFGTPEAPFGWYYDLLALWAHVTTTSAWMRVPTLAMALTCWWLISREVIPRLGHAAKASRAAAWTAAGMFLAVWLPLDNGLRPEPIIALGILLTWCSVERAVATSRLLPVAVACIVGALTLFSGPTGIASIGALLVAVGPLLTILQRRSKQFGAVPLVAPILAASTVTAILIFRDQTFAGESQASLLKRAVGPSLKWFDEHIRYERLFMASPDGSVARRFAVLALLVALSVAVAMSLRKGRIPGLAAGPSRRIIGITVTSFLAMMFTPTKWTHHFGVFAGLAGSLGALAAVAVASAALRSRRNRTVFAAVVLFVVALSFASVNGWWYVSNFGVPWSNSFPKLRWSLTTALLELTVIVLLLAAWFHFVATTNGSAKTRFGVRIDRIVQSPIAIATWSLVIFEVASLTMAMIGQYPAWTVGKSNLQALTGQTCGLAEEVLVEQDPNAGMLLPVSTPVADALGSSLAEAFTANGIPADVSADPVMEPPGDRSFVKENGMTTGGEAGNEGGTNATPGINGSRAQLPYNLDPARTPVLGSWQSGIQVVARLRSGWYRLPARDKAGPLLVVSAAGRFDHHEVKLQWATDSGAASGQPGGAFQFSDVGASPAWRNLRLPLSAIPSMATQIRLVADDEDLAPQHWIALTPPRIPQLRTLQDVVGYQDPVFLDWLVGLAFPCQRPFDHQYGVDETPKWRILPDRFGAEANSPVMDNNGGGPLGVTELLLKATTVASYLKDDWSRDWGALQRLTPYYPNAQPARLSLGTTTRSGLWNPAPLRH.

Helical transmembrane passes span 10–32, 210–232, 247–269, 399–421, 425–442, 449–471, 512–534, 547–564, 574–596, 603–625, 645–664, and 685–707; these read IARL…TPFL, LLKT…ALHL, SRWW…WHFV, VATS…LFSG, IASI…LTIL, FGAV…LIFR, SVAR…AMSL, SRRI…MMFT, VFAG…AALR, VFAA…WWYV, TALL…FHFV, and SPIA…MAMI.

The protein belongs to the emb family.

The protein localises to the cell membrane. Arabinosyl transferase responsible for the polymerization of arabinose into the arabinan of arabinogalactan. In Mycobacterium leprae (strain TN), this protein is Probable arabinosyltransferase C (embC).